Consider the following 488-residue polypeptide: MTDRRNLTTNQGVPIGDNQNSMTAGLKGPTLLEDYVLIEKLAHFDRERVPERVVHARGAGAHGKFVTKKSMKKYTKAQFLQEEGTETEVFARFSTVIHGQHSPETLRDPRGFSVKFYTEEGNYDFVGNNLPVFFIRDAIKFPDVIHSLKPDPRTNIQDGNRYWDFFSLTPEATTMITYLFSDEGTPASYREIRGSSVHAFKWINEEGKTVYVKLRWVPKAGIVNLSTDQAAQIQAKEFNHASRDLYEAIENGDYPEWDLYVQVLDPKDLDNYDFNPLDATKDWFEDVFPYEHVGTMTLNRNPDNIFAETESVGFNPGVLVPGMLPSEDRVLQGRLFSYSDTQRHRVGPNYLQLPINSPKTPVDNNQRDGQMPFKQQTSSINYEPNSYDTEPKENPAYIEPEQEIRGDISGRLVAEKPNNFGHAKEVWKRYSDAERAALVKNIVDDWEGVREDIKIRNLRNFYQVEPEFAERVAAGTGINLAEHVIDLK.

The disordered stretch occupies residues 1-24 (MTDRRNLTTNQGVPIGDNQNSMTA). The span at 7-23 (LTTNQGVPIGDNQNSMT) shows a compositional bias: polar residues. Active-site residues include H55 and N128. Y338 provides a ligand contact to heme.

This sequence belongs to the catalase family. The cofactor is heme.

Its subcellular location is the cytoplasm. It catalyses the reaction 2 H2O2 = O2 + 2 H2O. In terms of biological role, decomposes hydrogen peroxide into water and oxygen; serves to protect cells from the toxic effects of hydrogen peroxide. This is Catalase (kat) from Listeria seeligeri.